We begin with the raw amino-acid sequence, 96 residues long: Co-chaperonin GroES (96 aa).

The protein belongs to the GroES chaperonin family. As to quaternary structure, heptamer of 7 subunits arranged in a ring. Interacts with the chaperonin GroEL.

Its subcellular location is the cytoplasm. Its function is as follows. Together with the chaperonin GroEL, plays an essential role in assisting protein folding. The GroEL-GroES system forms a nano-cage that allows encapsulation of the non-native substrate proteins and provides a physical environment optimized to promote and accelerate protein folding. GroES binds to the apical surface of the GroEL ring, thereby capping the opening of the GroEL channel. The chain is Co-chaperonin GroES from Leptothrix cholodnii (strain ATCC 51168 / LMG 8142 / SP-6) (Leptothrix discophora (strain SP-6)).